We begin with the raw amino-acid sequence, 112 residues long: Cell cycle protein GpsB (112 aa).

Positions 42-77 form a coiled coil; it reads YQKMADMNNEVVKLSEENNKLKKEVEELRLRVATSR. A disordered region spans residues 75-97; that stretch reads TSRPSDNKSFSSNNSSSSNNNVD. The segment covering 81–95 has biased composition (low complexity); sequence NKSFSSNNSSSSNNN.

The protein belongs to the GpsB family. Forms polymers through the coiled coil domains. Interacts with PBP1, MreC and EzrA.

It is found in the cytoplasm. In terms of biological role, divisome component that associates with the complex late in its assembly, after the Z-ring is formed, and is dependent on DivIC and PBP2B for its recruitment to the divisome. Together with EzrA, is a key component of the system that regulates PBP1 localization during cell cycle progression. Its main role could be the removal of PBP1 from the cell pole after pole maturation is completed. Also contributes to the recruitment of PBP1 to the division complex. Not essential for septum formation. This is Cell cycle protein GpsB from Staphylococcus haemolyticus (strain JCSC1435).